A 44-amino-acid chain; its full sequence is Photosystem I reaction center subunit IX 2 (44 aa).

A helical membrane pass occupies residues 13 to 35 (APVLATLWLSSTAVILIGVNSYF).

Belongs to the PsaJ family.

The protein localises to the cellular thylakoid membrane. Its function is as follows. May help in the organization of the PsaE and PsaF subunits. This chain is Photosystem I reaction center subunit IX 2 (psaJ2), found in Prochlorococcus marinus (strain NATL2A).